The chain runs to 189 residues: Elongation factor P (189 aa).

Belongs to the elongation factor P family.

It localises to the cytoplasm. It functions in the pathway protein biosynthesis; polypeptide chain elongation. Functionally, involved in peptide bond synthesis. Stimulates efficient translation and peptide-bond synthesis on native or reconstituted 70S ribosomes in vitro. Probably functions indirectly by altering the affinity of the ribosome for aminoacyl-tRNA, thus increasing their reactivity as acceptors for peptidyl transferase. The chain is Elongation factor P from Onion yellows phytoplasma (strain OY-M).